Reading from the N-terminus, the 863-residue chain is MGNREMEELIPLVNRLQDAFSALGQSCLLELPQIAVVGGQSAGKSSVLENFVGRDFLPRGSGIVTRRPLVLQLVTSKAEYAEFLHCKGKKFTDFDEVRHEIEAETDRVTGMNKGISSIPINLRVYSPHVLNLTLIDLPGITKVPVGDQPPDIEYQIRDMIMQFITRENCLILAVTPANTDLANSDALKLAKEVDPQGLRTIGVITKLDLMDEGTDARDVLENKLLPLRRGYVGVVNRSQKDIDGKKDIKAAMLAERKFFLSHPAYRHIADRMGTPHLQKVLNQQLTNHIRDTLPNFRNKLQGQLLSIEHEVEAFKNFKPEDPTRKTKALLQMVQQFAVDFEKRIEGSGDQVDTLELSGGAKINRIFHERFPFEIVKMEFNEKELRREISYAIKNIHGIRTGLFTPDMAFEAIVKKQIVKLKGPSLKSVDLVMQELINTVKKCTKRLANFPRLCEETERIVANHIREREGKTKDQVLLLIDIQVSYINTNHEDFIGFANAQQRSSQVHKKSTIGNQVIRKGWLTVSNIGIMKGGSKGYWFVLTAESLSWYKDDEEKEKKYMLPLDNLKVRDVEKGFMSSKHVFALFNTEQRNVYKDYRFLELACDSQEDVDSWKASLLRAGVYPDKSVGSNKTENDENGQAENFSMDPQLERQVETIRNLVDSYMSIINKCIRDLIPKTIMHLMINNVKDFINSELLAQLYSSEDQNTLMEESAEQAQRRDEMLRMYQALKEALAIIGDINTATVSTPAPPPVDDSWLQHSRRSPPPSPTTQRRLTISAPLPRPTSGRGPAPAIPSPGPHSGAPPVPFRPGPLPPFPNSSDSFGAPPQVPSRPTRAPPSVPSRRPPPSPTRPTIIRPLESSLLD.

The region spanning 28–294 (LLELPQIAVV…LTNHIRDTLP (267 aa)) is the Dynamin-type G domain. The interval 38-45 (GGQSAGKS) is G1 motif. 38–46 (GGQSAGKSS) contacts GTP. Residues 64–66 (VTR) form a G2 motif region. The interval 136-139 (DLPG) is G3 motif. The G4 motif stretch occupies residues 205-208 (TKLD). Position 205–211 (205–211 (TKLDLMD)) interacts with GTP. Tyr231 carries the phosphotyrosine modification. The G5 motif stretch occupies residues 235–238 (VNRS). GTP is bound at residue 236 to 239 (NRSQ). Lys299 bears the N6-acetyllysine mark. The region spanning 515-621 (QVIRKGWLTV…WKASLLRAGV (107 aa)) is the PH domain. Tyr593 carries the phosphotyrosine modification. Residue Lys594 is modified to N6-acetyllysine. Disordered regions lie at residues 626-647 (SVGSNKTENDENGQAENFSMDP) and 742-863 (ATVS…SLLD). Residues 627–642 (VGSNKTENDENGQAEN) show a composition bias toward polar residues. A GED domain is found at 653-744 (VETIRNLVDS…IIGDINTATV (92 aa)). Phosphoserine is present on residues Ser763 and Ser767. Composition is skewed to pro residues over residues 791–816 (PAIPSPGPHSGAPPVPFRPGPLPPFP) and 826–849 (PQVPSRPTRAPPSVPSRRPPPSPT). Ser847 bears the Phosphoserine mark.

It belongs to the TRAFAC class dynamin-like GTPase superfamily. Dynamin/Fzo/YdjA family.

It is found in the cytoplasm. Its subcellular location is the cytoskeleton. It catalyses the reaction GTP + H2O = GDP + phosphate + H(+). In terms of biological role, microtubule-associated force-producing protein involved in producing microtubule bundles and able to bind and hydrolyze GTP. Most probably involved in vesicular trafficking processes, in particular endocytosis. This Mus musculus (Mouse) protein is Dynamin-3 (Dnm3).